Here is a 1028-residue protein sequence, read N- to C-terminus: Exportin-T (1028 aa).

The protein belongs to the exportin family.

It is found in the nucleus. It localises to the cytoplasm. Its function is as follows. tRNA nucleus export receptor which facilitates tRNA translocation across the nuclear pore complex. Involved in pre-tRNA splicing, probably by affecting the interaction of pre-tRNA with splicing endonuclease. The chain is Exportin-T (los1) from Aspergillus terreus (strain NIH 2624 / FGSC A1156).